The chain runs to 398 residues: Putative F-box/kelch-repeat protein At2g29780 (398 aa).

The tract at residues 1-46 (MAIISETSDDGSHGGVPNKKPEELHKNPKEDDHQEEEVENHPPIPR) is disordered. The span at 19–32 (KKPEELHKNPKEDD) shows a compositional bias: basic and acidic residues. The F-box domain occupies 43-90 (PIPRQIPQALIRRTVALIKRCHYPSLSLLSKAFRIVISSPELHQTRSS). 4 Kelch repeats span residues 148–195 (KMYV…VING), 196–241 (KIYV…GFVT), 243–289 (VVMQ…VIED), and 295–342 (DPYC…GGKL).

This is Putative F-box/kelch-repeat protein At2g29780 from Arabidopsis thaliana (Mouse-ear cress).